We begin with the raw amino-acid sequence, 442 residues long: 26S proteasome non-ATPase regulatory subunit 12 homolog A (442 aa).

Positions 6–137 form a coiled coil; the sequence is KLEATIDRLL…EAADLMQEVA (132 aa). Positions 232–403 constitute a PCI domain; it reads EICRSYKAIY…GIVCFQIAKD (172 aa).

This sequence belongs to the proteasome subunit p55 family. As to quaternary structure, component of the 19S regulatory particle (RP/PA700) lid subcomplex of the 26S proteasome. The 26S proteasome is composed of a core protease (CP), known as the 20S proteasome, capped at one or both ends by the 19S regulatory particle (RP/PA700). The RP/PA700 complex is composed of at least 17 different subunits in two subcomplexes, the base and the lid, which form the portions proximal and distal to the 20S proteolytic core, respectively. In terms of tissue distribution, ubiquitous with highest expression in flowers.

The protein resides in the cytoplasm. It localises to the nucleus. Acts as a regulatory subunit of the 26 proteasome which is involved in the ATP-dependent degradation of ubiquitinated proteins. Required for gametogenesis and sporophyte development. Acts redundantly with RPN5B. The chain is 26S proteasome non-ATPase regulatory subunit 12 homolog A (RPN5A) from Arabidopsis thaliana (Mouse-ear cress).